Here is a 180-residue protein sequence, read N- to C-terminus: Cell division protein ZapC (180 aa).

Belongs to the ZapC family. In terms of assembly, interacts directly with FtsZ.

Its subcellular location is the cytoplasm. In terms of biological role, contributes to the efficiency of the cell division process by stabilizing the polymeric form of the cell division protein FtsZ. Acts by promoting interactions between FtsZ protofilaments and suppressing the GTPase activity of FtsZ. This chain is Cell division protein ZapC, found in Vibrio vulnificus (strain CMCP6).